A 1475-amino-acid polypeptide reads, in one-letter code: Mediator of RNA polymerase II transcription subunit 1.1 (1475 aa).

3 disordered regions span residues 579-600, 645-894, and 908-1475; these read STIGRTRPQPRPKREPNQLTSM, GLAS…KMRE, and PDVE…IDDE. Residues 655-666 show a composition bias toward low complexity; that stretch reads PVAAAAAAPGGP. A compositionally biased stretch (polar residues) spans 755-766; sequence QRSSSEQHNPNP. Low complexity predominate over residues 767–800; that stretch reads HQMSQYQMQQYQQNQQFRMHQMQQQQQQQFQMQS. Positions 810–819 are enriched in acidic residues; it reads TDEDSDEECD. Low complexity predominate over residues 829 to 838; it reads STSSRMSSVP. A compositionally biased stretch (pro residues) spans 869–880; the sequence is TPSPLSAPPKPF. Residues 915-929 show a composition bias toward low complexity; it reads QQLSSSSSSSQAEAS. The segment covering 941-952 has biased composition (pro residues); the sequence is PPKPSSSSAPPP. 2 stretches are compositionally biased toward low complexity: residues 969-989 and 1037-1049; these read QQEQALQKQLQQQESVESELA and QKPTDTSSQSTSS. Basic and acidic residues-rich tracts occupy residues 1052-1070, 1080-1148, and 1155-1180; these read PPKKEPADEQPEREKEKLI, VVDD…EKEP, and EKKDEKEKDRREPERKKGKSDGKEYS. Residues 1098 to 1135 are a coiled coil; sequence DRDRDEDREKVRDKEDKAQREKDKKEKERERRRQRDRD. Positions 1181–1193 are enriched in polar residues; the sequence is KASTTSLIPTLSL. Over residues 1199–1215 the composition is skewed to basic and acidic residues; it reads PKKDTVEEEKKDVKEEA. Residues 1242 to 1252 show a composition bias toward low complexity; the sequence is APVAPAVQQQQ. The span at 1281–1291 shows a compositional bias: pro residues; that stretch reads PLQPPPPPQMT. A compositionally biased stretch (polar residues) spans 1308 to 1317; it reads PGSSRPSGNR. Pro residues-rich tracts occupy residues 1320–1334 and 1425–1440; these read PLPPPPPMIRGPPPD and PPAPPPPQMIPLPKDP.

Belongs to the Mediator complex subunit 1 family. In terms of assembly, component of the Mediator complex.

It localises to the nucleus. Component of the Mediator complex, a coactivator involved in the regulated transcription of nearly all RNA polymerase II-dependent genes. Mediator functions as a bridge to convey information from gene-specific regulatory proteins to the basal RNA polymerase II transcription machinery. Mediator is recruited to promoters by direct interactions with regulatory proteins and serves as a scaffold for the assembly of a functional preinitiation complex with RNA polymerase II and the general transcription factors. The protein is Mediator of RNA polymerase II transcription subunit 1.1 (sop-3) of Caenorhabditis elegans.